Consider the following 967-residue polypeptide: Probable helicase DDB_G0274399 (967 aa).

Residues 161–192 (EMTDDEDTAPTSAATHVGAPTKSTTTTTTTTT) form a disordered region. Position 357–364 (357–364 (GPPGTGKT)) interacts with ATP. Disordered stretches follow at residues 529–553 (SAIPSSSASTAAATSGSSRSTQDTS) and 892–967 (QKQK…RTRR). Positions 890 to 949 (NLQKQKDIEKRKKQHKRQKQKSKENDKKKQLKKRKELNNNDNNNNNKESSNKEVQEITNA) form a coiled coil. Residues 900–909 (RKKQHKRQKQ) are compositionally biased toward basic residues. A compositionally biased stretch (low complexity) spans 928–937 (NNDNNNNNKE).

The protein belongs to the DNA2/NAM7 helicase family.

It is found in the nucleus. The chain is Probable helicase DDB_G0274399 from Dictyostelium discoideum (Social amoeba).